The chain runs to 233 residues: Nickel import system ATP-binding protein NikE (233 aa).

The ABC transporter domain occupies 2–228 (IELKHVTFGY…DRHPYTKELV (227 aa)). 35–42 (GESGCGKS) provides a ligand contact to ATP.

This sequence belongs to the ABC transporter superfamily. As to quaternary structure, the complex is composed of two ATP-binding proteins (NikD and NikE), two transmembrane proteins (NikB and NikC) and a solute-binding protein (NikA).

It is found in the cell membrane. The enzyme catalyses Ni(2+)(out) + ATP + H2O = Ni(2+)(in) + ADP + phosphate + H(+). Its function is as follows. Part of the ABC transporter complex NikABCDE (Opp2) involved in nickel import. Probably responsible for energy coupling to the transport system. In Staphylococcus aureus (strain MSSA476), this protein is Nickel import system ATP-binding protein NikE.